The primary structure comprises 310 residues: uncharacterized protein (310 aa).

This is an uncharacterized protein from Acanthamoeba polyphaga (Amoeba).